We begin with the raw amino-acid sequence, 424 residues long: Elongation factor 1-alpha (424 aa).

In terms of domain architecture, tr-type G spans 5–223; the sequence is KPHLNLAFIG…NALKEPQKPV (219 aa). The segment at 14-21 is G1; the sequence is GHVDHGKS. 14–21 is a GTP binding site; the sequence is GHVDHGKS. Mg(2+) is bound at residue serine 21. The segment at 70-74 is G2; it reads GVTID. The tract at residues 91–94 is G3; it reads DCPG. Residues 91-95 and 146-149 each bind GTP; these read DCPGH and NKMD. Residues 146–149 are G4; sequence NKMD. Positions 187-189 are G5; it reads SAY.

It belongs to the TRAFAC class translation factor GTPase superfamily. Classic translation factor GTPase family. EF-Tu/EF-1A subfamily.

It is found in the cytoplasm. It catalyses the reaction GTP + H2O = GDP + phosphate + H(+). GTP hydrolase that promotes the GTP-dependent binding of aminoacyl-tRNA to the A-site of ribosomes during protein biosynthesis. The sequence is that of Elongation factor 1-alpha from Methanothrix thermoacetophila (strain DSM 6194 / JCM 14653 / NBRC 101360 / PT) (Methanosaeta thermophila).